The sequence spans 359 residues: NADPH HC-toxin reductase 2 (359 aa).

NADP(+) contacts are provided by residues Arg-39, 67–68 (DL), 87–89 (VAT), Tyr-177, Lys-181, 206–209 (LGLV), and Thr-221. Catalysis depends on Lys-181, which acts as the Proton donor.

The protein belongs to the NAD(P)-dependent epimerase/dehydratase family.

Functionally, in tandem with Hm1, NADPH-dependent HC toxin reductase (HCTR), which inactivates HC toxin, a cyclic tetrapeptide produced by the fungus Cochliobolus carbonum to permit infection and acting as an inhibitor of host histone deacetylases (HDACs), thus conferring resistance against C.carbonum race 1 in resistant cultivars (e.g. cv. B73 and cv. Wisconsin 22). Catalyzes the production of 8-hydroxy derivative of HC-toxin via the reduction of the 8-keto group of 2-amino-9,10-epoxy-8-oxo-decanoic acid, an amino acid of the HC-toxin. In Zea mays (Maize), this protein is NADPH HC-toxin reductase 2.